A 198-amino-acid polypeptide reads, in one-letter code: Imidazoleglycerol-phosphate dehydratase (198 aa).

The protein belongs to the imidazoleglycerol-phosphate dehydratase family.

It is found in the cytoplasm. The catalysed reaction is D-erythro-1-(imidazol-4-yl)glycerol 3-phosphate = 3-(imidazol-4-yl)-2-oxopropyl phosphate + H2O. The protein operates within amino-acid biosynthesis; L-histidine biosynthesis; L-histidine from 5-phospho-alpha-D-ribose 1-diphosphate: step 6/9. This chain is Imidazoleglycerol-phosphate dehydratase, found in Methylobacillus flagellatus (strain ATCC 51484 / DSM 6875 / VKM B-1610 / KT).